Consider the following 612-residue polypeptide: Dihydroxy-acid dehydratase (612 aa).

Residue D81 coordinates Mg(2+). C122 provides a ligand contact to [2Fe-2S] cluster. 2 residues coordinate Mg(2+): D123 and K124. N6-carboxylysine is present on K124. C196 contacts [2Fe-2S] cluster. Mg(2+) is bound at residue E492. Residue S518 is the Proton acceptor of the active site.

It belongs to the IlvD/Edd family. Homodimer. Requires [2Fe-2S] cluster as cofactor. It depends on Mg(2+) as a cofactor.

It catalyses the reaction (2R)-2,3-dihydroxy-3-methylbutanoate = 3-methyl-2-oxobutanoate + H2O. The catalysed reaction is (2R,3R)-2,3-dihydroxy-3-methylpentanoate = (S)-3-methyl-2-oxopentanoate + H2O. Its pathway is amino-acid biosynthesis; L-isoleucine biosynthesis; L-isoleucine from 2-oxobutanoate: step 3/4. The protein operates within amino-acid biosynthesis; L-valine biosynthesis; L-valine from pyruvate: step 3/4. Functions in the biosynthesis of branched-chain amino acids. Catalyzes the dehydration of (2R,3R)-2,3-dihydroxy-3-methylpentanoate (2,3-dihydroxy-3-methylvalerate) into 2-oxo-3-methylpentanoate (2-oxo-3-methylvalerate) and of (2R)-2,3-dihydroxy-3-methylbutanoate (2,3-dihydroxyisovalerate) into 2-oxo-3-methylbutanoate (2-oxoisovalerate), the penultimate precursor to L-isoleucine and L-valine, respectively. The chain is Dihydroxy-acid dehydratase from Paracoccus denitrificans (strain Pd 1222).